A 554-amino-acid polypeptide reads, in one-letter code: Wee1-like protein kinase 2-C (554 aa).

2 disordered regions span residues 1-86 and 145-183; these read MRTA…GGEC and TLVN…SQMK. Composition is skewed to polar residues over residues 38 to 48 and 147 to 163; these read SPVSSWRTNNC and VNVN…THFQ. Positions 213–487 constitute a Protein kinase domain; sequence FLEIEKIGAG…AKNSVLRRCV (275 aa). Residues 219–227 and K242 contribute to the ATP site; that span reads IGAGEFGSV. Residue D340 is the Proton acceptor of the active site. The Mg(2+) site is built by N345 and D377. Residues 490–516 adopt a coiled-coil conformation; it reads AAELQKQLNVEKFKTAMLERELQAAKL.

It belongs to the protein kinase superfamily. Ser/Thr protein kinase family. WEE1 subfamily.

Its subcellular location is the nucleus. The enzyme catalyses L-tyrosyl-[protein] + ATP = O-phospho-L-tyrosyl-[protein] + ADP + H(+). Its function is as follows. Protein tyrosine kinase that phosphorylates and inhibits cdk1 and acts as a regulator of meiosis in oocytes. Required to ensure the meiotic cell cycle in oocytes by phosphorylating cdk1 at 'Tyr-15', leading to inhibit cdk1 activity and prevent meiosis. This chain is Wee1-like protein kinase 2-C (wee2-c), found in Xenopus laevis (African clawed frog).